Consider the following 498-residue polypeptide: Argininosuccinate lyase 1 (498 aa).

This sequence belongs to the lyase 1 family. Argininosuccinate lyase subfamily.

Its subcellular location is the cytoplasm. It catalyses the reaction 2-(N(omega)-L-arginino)succinate = fumarate + L-arginine. Its pathway is amino-acid biosynthesis; L-arginine biosynthesis; L-arginine from L-ornithine and carbamoyl phosphate: step 3/3. The chain is Argininosuccinate lyase 1 from Shouchella clausii (strain KSM-K16) (Alkalihalobacillus clausii).